Consider the following 793-residue polypeptide: MGIGSKILENNIQKSISLGFYHSHSELRKSFYEFFKSKNHEILRSSSVIPDENDGTLLFTNAGMNQFKPLILSSTESRRVANIQKCIRAGGKHNDLDDVGKDLHHQTFFEMMGNWSFNDAFSKEEACRYAWEYLVEILGINADRLYVSYFGGIEKLGLPEDRECREIWKRIGVSSNRILPFVAENFWEMGAAGPCGPCTEIHYDRIGGRDASRLVNIDDSVVEIWNIVFMSSVRDSCGQIRHLGKNHIDTGMGFERLLSVVQNKTSNFDTDVFTPILEKTSELAKKQYTGSLDSRQDATFRLVADHIRAATVAISDGAVPDGTGCGFIVRKMMRRAFLQGISKLGIERYAMSELVPVVASTMKEVYPEIHDTSTHIRKIFNDEEAQFWKTVDKAKKMFDSVAAESKSPIISGRKAFNLFETHGLPLAVTVELARNIGREVDETEFERCRLEAQKVSQKASQFKLPISADDFPSHSDKEKYSYVFRNGKYEFPQVKTRILQVYKDQQKAESLEANDRGFLVLEECQFYGEQGGQTSDTGHLLIDGREVFEVENAKKIAGGAVTVLFGRALLPIRRDLRVEQKLDETRREGVMRAHSATHLLNWALQKLGVGSGQKGSSVDCDRFRFDYSTGDEDLSKEQRTELLIKCEMKMREFIQNGGFTEIIETSLEEAKKIENLQSDVKEDRIGGASVRVVALGSGADVPVECCSGTHIHDVRVIDDVAIMSDKSMGQRLRRIIVLTGKEAAACRNYTKSIYEDLRSTDPKERSKTGKNIDWKRVPIADQARISILLKQKK.

ATP is bound by residues arginine 88, tryptophan 187, and 224–226; that span reads IWN. L-alanine-binding residues include asparagine 226 and aspartate 249. Glycine 253 provides a ligand contact to ATP. Zn(2+) is bound by residues histidine 594, histidine 598, cysteine 706, and histidine 710.

The protein belongs to the class-II aminoacyl-tRNA synthetase family. In terms of assembly, monomer. Zn(2+) serves as cofactor.

It is found in the mitochondrion. It carries out the reaction tRNA(Ala) + L-alanine + ATP = L-alanyl-tRNA(Ala) + AMP + diphosphate. Catalyzes the attachment of alanine to tRNA(Ala) in a two-step reaction: alanine is first activated by ATP to form Ala-AMP and then transferred to the acceptor end of tRNA(Ala). Also edits incorrectly charged tRNA(Ala) via its editing domain. This chain is Alanine--tRNA ligase, mitochondrial, found in Caenorhabditis elegans.